Here is a 437-residue protein sequence, read N- to C-terminus: MIIGKSPCSVCGEAGDGAHFGAEACRACAAFFRRSVALNKAYVCRAMGTCVIQKNVRCMCRACRFTKCIAVGMRKSAVQRHRELFASQETSSESSSNPRISPTLSWPMDISPQSYEETGMPTLSQLNENYNQMSTVRRVIHNTGGDNIFHRREPKAVAYTDAHNVHLKEIGLVADWIIKSYPDFEQLHQEQKKLLYRNFFLPFMILECGYMCCLNNRTDILFLPSGDYIDCNRPETFYGHRIKSHLISPNEAVRMFGPSFEIYRRNVLDPMRRENVDNFEFFTLCSLVLWDHGLEGQTEECVQMARCNRERILREVLYYYRRVKQISDPSMRLANLLVLLPALQRSVRRFQEDVEITHVFNVYSVEETFYELVSGRLSDSFFQTTQLTTSVEEEKVIKTEEIDSVWDLNKGQLVEMYEFPTPPLHTPTEMDPSTTQL.

A DNA-binding region (nuclear receptor) is located at residues 5–80 (KSPCSVCGEA…VGMRKSAVQR (76 aa)). 2 consecutive NR C4-type zinc fingers follow at residues 8-28 (CSVC…CRAC) and 44-68 (CRAM…FTKC). One can recognise an NR LBD domain in the interval 115–376 (YEETGMPTLS…ETFYELVSGR (262 aa)).

The protein belongs to the nuclear hormone receptor family. In terms of tissue distribution, expressed in the pharynx, intestine and hypodermis.

It localises to the nucleus. In terms of biological role, orphan nuclear receptor. The sequence is that of Nuclear hormone receptor family member nhr-28 (nhr-28) from Caenorhabditis elegans.